A 367-amino-acid chain; its full sequence is UDP-N-acetylglucosamine--N-acetylmuramyl-(pentapeptide) pyrophosphoryl-undecaprenol N-acetylglucosamine transferase (367 aa).

UDP-N-acetyl-alpha-D-glucosamine contacts are provided by residues 13–15, Arg168, Ser196, Ile252, and Gln297; that span reads TGG.

It belongs to the glycosyltransferase 28 family. MurG subfamily.

The protein localises to the cell inner membrane. The enzyme catalyses di-trans,octa-cis-undecaprenyl diphospho-N-acetyl-alpha-D-muramoyl-L-alanyl-D-glutamyl-meso-2,6-diaminopimeloyl-D-alanyl-D-alanine + UDP-N-acetyl-alpha-D-glucosamine = di-trans,octa-cis-undecaprenyl diphospho-[N-acetyl-alpha-D-glucosaminyl-(1-&gt;4)]-N-acetyl-alpha-D-muramoyl-L-alanyl-D-glutamyl-meso-2,6-diaminopimeloyl-D-alanyl-D-alanine + UDP + H(+). It functions in the pathway cell wall biogenesis; peptidoglycan biosynthesis. Cell wall formation. Catalyzes the transfer of a GlcNAc subunit on undecaprenyl-pyrophosphoryl-MurNAc-pentapeptide (lipid intermediate I) to form undecaprenyl-pyrophosphoryl-MurNAc-(pentapeptide)GlcNAc (lipid intermediate II). In Methylibium petroleiphilum (strain ATCC BAA-1232 / LMG 22953 / PM1), this protein is UDP-N-acetylglucosamine--N-acetylmuramyl-(pentapeptide) pyrophosphoryl-undecaprenol N-acetylglucosamine transferase.